Consider the following 404-residue polypeptide: CinA-like protein (404 aa).

This sequence belongs to the CinA family.

The polypeptide is CinA-like protein (Deinococcus radiodurans (strain ATCC 13939 / DSM 20539 / JCM 16871 / CCUG 27074 / LMG 4051 / NBRC 15346 / NCIMB 9279 / VKM B-1422 / R1)).